Consider the following 146-residue polypeptide: 3-hydroxyacyl-[acyl-carrier-protein] dehydratase FabZ (146 aa).

His49 is an active-site residue.

This sequence belongs to the thioester dehydratase family. FabZ subfamily.

Its subcellular location is the cytoplasm. It catalyses the reaction a (3R)-hydroxyacyl-[ACP] = a (2E)-enoyl-[ACP] + H2O. In terms of biological role, involved in unsaturated fatty acids biosynthesis. Catalyzes the dehydration of short chain beta-hydroxyacyl-ACPs and long chain saturated and unsaturated beta-hydroxyacyl-ACPs. This chain is 3-hydroxyacyl-[acyl-carrier-protein] dehydratase FabZ, found in Psychrobacter arcticus (strain DSM 17307 / VKM B-2377 / 273-4).